Consider the following 842-residue polypeptide: MAGFNRNLTLVTTLLIFHQLCSNVSCSTSNSFTRNHTIREGDSLISEDESFELGFFTPKNSTLRYVGIWYKNIEPQTVVWVANREKPLLDHKGALKIADDGNLVIVNGQNETIWSTNVEPESNNTVAVLFKTGDLVLCSDSDRRKWYWESFNNPTDTFLPGMRVRVNPSLGENRAFIPWKSESDPSPGKYSMGIDPVGALEIVIWEGEKRKWRSGPWNSAIFTGIPDMLRFTNYIYGFKLSSPPDRDGSVYFTYVASDSSDFLRFWIRPDGVEEQFRWNKDIRNWNLLQWKPSTECEKYNRCGNYSVCDDSKEFDSGKCSCIDGFEPVHQDQWNNRDFSGGCQRRVPLNCNQSLVAGQEDGFTVLKGIKVPDFGSVVLHNNSETCKDVCARDCSCKAYALVVGIGCMIWTRDLIDMEHFERGGNSINIRLAGSKLGGGKENSTLWIIVFSVIGAFLLGLCIWILWKFKKSLKAFLWKKKDITVSDIIENRDYSSSPIKVLVGDQVDTPDLPIFSFDSVASATGDFAEENKLGQGGFGTVYKGNFSEGREIAVKRLSGKSKQGLEEFKNEILLIAKLQHRNLVRLLGCCIEDNEKMLLYEYMPNKSLDRFLFDESKQGSLDWRKRWEVIGGIARGLLYLHRDSRLKIIHRDLKASNILLDTEMNPKISDFGMARIFNYRQDHANTIRVVGTYGYMAPEYAMEGIFSEKSDVYSFGVLILEIVSGRKNVSFRGTDHGSLIGYAWHLWSQGKTKEMIDPIVKDTRDVTEAMRCIHVGMLCTQDSVIHRPNMGSVLLMLESQTSQLPPPRQPTFHSFLNSGDIELNFDGHDVASVNDVTFTTIVGR.

An N-terminal signal peptide occupies residues 1-22 (MAGFNRNLTLVTTLLIFHQLCS). 9 N-linked (GlcNAc...) asparagine glycosylation sites follow: asparagine 7, asparagine 23, asparagine 35, asparagine 60, asparagine 110, asparagine 123, asparagine 304, asparagine 351, and asparagine 380. At 23-443 (NVSCSTSNSF…KLGGGKENST (421 aa)) the chain is on the extracellular side. The region spanning 29–150 (SNSFTRNHTI…SDRRKWYWES (122 aa)) is the Bulb-type lectin domain. The EGF-like domain maps to 292 to 331 (PSTECEKYNRCGNYSVCDDSKEFDSGKCSCIDGFEPVHQD). Disulfide bonds link cysteine 296-cysteine 308 and cysteine 302-cysteine 319. One can recognise a PAN domain in the interval 350–431 (CNQSLVAGQE…GGNSINIRLA (82 aa)). 2 disulfides stabilise this stretch: cysteine 385/cysteine 406 and cysteine 389/cysteine 395. N-linked (GlcNAc...) asparagine glycosylation is present at asparagine 441. The helical transmembrane segment at 444–464 (LWIIVFSVIGAFLLGLCIWIL) threads the bilayer. Residues 465 to 842 (WKFKKSLKAF…DVTFTTIVGR (378 aa)) lie on the Cytoplasmic side of the membrane. The Protein kinase domain occupies 525-814 (FAEENKLGQG…PRQPTFHSFL (290 aa)). ATP is bound by residues 531–539 (LGQGGFGTV) and lysine 553. Serine 559 is subject to Phosphoserine. Positions 614 to 631 (SKQGSLDWRKRWEVIGGI) are caM-binding. Aspartate 650 serves as the catalytic Proton acceptor. Phosphoserine occurs at positions 654 and 667. The residue at position 684 (threonine 684) is a Phosphothreonine. Phosphoserine is present on residues serine 728 and serine 830. Threonine 837 is subject to Phosphothreonine.

Belongs to the protein kinase superfamily. Ser/Thr protein kinase family.

Its subcellular location is the cell membrane. The catalysed reaction is L-seryl-[protein] + ATP = O-phospho-L-seryl-[protein] + ADP + H(+). The enzyme catalyses L-threonyl-[protein] + ATP = O-phospho-L-threonyl-[protein] + ADP + H(+). This chain is Putative G-type lectin S-receptor-like serine/threonine-protein kinase At1g61610, found in Arabidopsis thaliana (Mouse-ear cress).